A 697-amino-acid chain; its full sequence is SITS-binding protein (697 aa).

The disordered stretch occupies residues 1-20 (MARRAKKMASNSGDSSPEPG). Topologically, residues 2-29 (ARRAKKMASNSGDSSPEPGIKEINETWK) are cytoplasmic. Residues 30–50 (GAIACLGVALLFLMTIGVLYW) traverse the membrane as a helical segment. Residues N112, N134, N162, N386, N405, and N470 are each glycosylated (N-linked (GlcNAc...) asparagine). 2 helical membrane-spanning segments follow: residues 503–521 (GLIPSILHYSLLGYSFFIP) and 542–562 (WMQIATFLPVMSFSTPPWVFG). N-linked (GlcNAc...) asparagine glycosylation occurs at N568.

Belongs to the glycosyl hydrolase 31 family. As to quaternary structure, homodimer; disulfide-linked. In terms of tissue distribution, electroplax tissue, brain (200-fold less), and heart (500-fold less).

Its subcellular location is the membrane. Functionally, this glycoprotein is probably not a functional part of the chloride channel. The protein is SITS-binding protein of Tetronarce californica (Pacific electric ray).